We begin with the raw amino-acid sequence, 258 residues long: Imidazole glycerol phosphate synthase subunit HisF (258 aa).

Catalysis depends on residues D11 and D130.

It belongs to the HisA/HisF family. As to quaternary structure, heterodimer of HisH and HisF.

The protein resides in the cytoplasm. The enzyme catalyses 5-[(5-phospho-1-deoxy-D-ribulos-1-ylimino)methylamino]-1-(5-phospho-beta-D-ribosyl)imidazole-4-carboxamide + L-glutamine = D-erythro-1-(imidazol-4-yl)glycerol 3-phosphate + 5-amino-1-(5-phospho-beta-D-ribosyl)imidazole-4-carboxamide + L-glutamate + H(+). Its pathway is amino-acid biosynthesis; L-histidine biosynthesis; L-histidine from 5-phospho-alpha-D-ribose 1-diphosphate: step 5/9. Functionally, IGPS catalyzes the conversion of PRFAR and glutamine to IGP, AICAR and glutamate. The HisF subunit catalyzes the cyclization activity that produces IGP and AICAR from PRFAR using the ammonia provided by the HisH subunit. This is Imidazole glycerol phosphate synthase subunit HisF from Photorhabdus laumondii subsp. laumondii (strain DSM 15139 / CIP 105565 / TT01) (Photorhabdus luminescens subsp. laumondii).